Consider the following 403-residue polypeptide: Nucleolar protein 13 (403 aa).

Composition is skewed to basic and acidic residues over residues 1–35 and 75–97; these read MSET…RKAE and KSIE…KDAQ. 2 disordered regions span residues 1-43 and 72-116; these read MSET…IDLK and IDPK…EVVK. The residue at position 2 (serine 2) is an N-acetylserine. Serine 2 is modified (phosphoserine). Residues 99–108 are compositionally biased toward polar residues; it reads EESTINTPTG. The residue at position 105 (threonine 105) is a Phosphothreonine. RRM domains are found at residues 125–219 and 239–317; these read YGVW…DSEN and RILF…YGED. Basic and acidic residues predominate over residues 313 to 329; sequence EYGEDRSKRQVRKKVEN. Residues 313 to 403 are disordered; the sequence is EYGEDRSKRQ…PSQGKKVKFD (91 aa). The span at 330 to 344 shows a compositional bias: polar residues; sequence VSRNNSSSFDISNNK. Serine 335 carries the phosphoserine modification. The segment covering 345 to 361 has biased composition (basic and acidic residues); the sequence is GYDRAGQDNGSKPEYKR. Residues 371–381 show a composition bias toward polar residues; the sequence is DSNNRTKSSVA.

It localises to the nucleus. It is found in the nucleolus. The chain is Nucleolar protein 13 (NOP13) from Saccharomyces cerevisiae (strain ATCC 204508 / S288c) (Baker's yeast).